A 324-amino-acid polypeptide reads, in one-letter code: tRNA-dihydrouridine(20a/20b) synthase [NAD(P)+]-like (324 aa).

Residues 33–35 (PMV) and Gln87 contribute to the FMN site. Residue Cys116 is the Proton donor of the active site. Residues Lys158, His186, 216–218 (NGD), and 240–241 (AR) contribute to the FMN site.

This sequence belongs to the Dus family. Dus4 subfamily. It depends on FMN as a cofactor.

It catalyses the reaction 5,6-dihydrouridine(20a) in tRNA + NADP(+) = uridine(20a) in tRNA + NADPH + H(+). The enzyme catalyses 5,6-dihydrouridine(20a) in tRNA + NAD(+) = uridine(20a) in tRNA + NADH + H(+). It carries out the reaction 5,6-dihydrouridine(20b) in tRNA + NAD(+) = uridine(20b) in tRNA + NADH + H(+). The catalysed reaction is 5,6-dihydrouridine(20b) in tRNA + NADP(+) = uridine(20b) in tRNA + NADPH + H(+). In terms of biological role, catalyzes the synthesis of dihydrouridine, a modified base found in the D-loop of most tRNAs. The protein is tRNA-dihydrouridine(20a/20b) synthase [NAD(P)+]-like (Dus4l) of Mus musculus (Mouse).